The primary structure comprises 272 residues: Aquaporin FA-CHIP (272 aa).

At 1–17 (MASEFKKKAFWRAVIAE) the chain is on the cytoplasmic side. A helical membrane pass occupies residues 18–35 (FLAMILFVFISIGAALGF). Topologically, residues 36–52 (NFPIEEKANQTVGRSQD) are extracellular. Asn-44 carries N-linked (GlcNAc...) asparagine glycosylation. Residues 53 to 71 (IVKVSLAFGISIATMAQSV) form a helical membrane-spanning segment. Residues 72-97 (GHVSGAHLNPAVTLGCLLSCQISILK) lie on the Cytoplasmic side of the membrane. The short motif at 80 to 82 (NPA) is the NPA 1 element. The chain crosses the membrane as a helical span at residues 98–119 (AVMYIIAQCLGAVVATAILSGI). Residues 120 to 139 (TSGLENNSLGLNGLSPGVSA) are Extracellular-facing. Asn-125 is a glycosylation site (N-linked (GlcNAc...) asparagine). The helical transmembrane segment at 140 to 160 (GQGLGVEILVTFQLVLCVVAV) threads the bilayer. The Cytoplasmic portion of the chain corresponds to 161–168 (TDRRRHDV). A helical transmembrane segment spans residues 169–188 (SGSVPLAIGLSVALGHLIAI). Topologically, residues 189–214 (DYTGCGMNPARSFGSAVLTKNFTYHW) are extracellular. Residues 196–198 (NPA) carry the NPA 2 motif. The N-linked (GlcNAc...) asparagine glycan is linked to Asn-209. Residues 215-236 (IFWVGPMIGGAAAAIIYDFILA) form a helical membrane-spanning segment. Residues 237–272 (PRTSDLTDRMKVWTNGQVEEYELDGDDNTRVEMKPK) are Cytoplasmic-facing.

Belongs to the MIP/aquaporin (TC 1.A.8) family.

Its subcellular location is the membrane. Its function is as follows. Forms a water-specific channel. This Pelophylax lessonae (Pool frog) protein is Aquaporin FA-CHIP (AQPA).